The sequence spans 73 residues: Translation initiation factor IF-1 (73 aa).

One can recognise an S1-like domain in the interval Met1–Lys73.

It belongs to the IF-1 family. As to quaternary structure, component of the 30S ribosomal translation pre-initiation complex which assembles on the 30S ribosome in the order IF-2 and IF-3, IF-1 and N-formylmethionyl-tRNA(fMet); mRNA recruitment can occur at any time during PIC assembly.

It localises to the cytoplasm. In terms of biological role, one of the essential components for the initiation of protein synthesis. Stabilizes the binding of IF-2 and IF-3 on the 30S subunit to which N-formylmethionyl-tRNA(fMet) subsequently binds. Helps modulate mRNA selection, yielding the 30S pre-initiation complex (PIC). Upon addition of the 50S ribosomal subunit IF-1, IF-2 and IF-3 are released leaving the mature 70S translation initiation complex. The protein is Translation initiation factor IF-1 of Mycolicibacterium gilvum (strain PYR-GCK) (Mycobacterium gilvum (strain PYR-GCK)).